A 433-amino-acid chain; its full sequence is 23S rRNA (uracil(1939)-C(5))-methyltransferase RlmD (433 aa).

A TRAM domain is found at 10-68 (RTTTRQIITVSVNDLDSFGQGVARHNGKTLFIPGLLPQENAEVTVTEDKKQYARAKVVR). Residues C81, C87, C90, and C162 each contribute to the [4Fe-4S] cluster site. 6 residues coordinate S-adenosyl-L-methionine: Q265, F294, N299, E315, N342, and D363. The active-site Nucleophile is C389.

Belongs to the class I-like SAM-binding methyltransferase superfamily. RNA M5U methyltransferase family. RlmD subfamily.

The enzyme catalyses uridine(1939) in 23S rRNA + S-adenosyl-L-methionine = 5-methyluridine(1939) in 23S rRNA + S-adenosyl-L-homocysteine + H(+). Functionally, catalyzes the formation of 5-methyl-uridine at position 1939 (m5U1939) in 23S rRNA. This is 23S rRNA (uracil(1939)-C(5))-methyltransferase RlmD from Escherichia coli O6:K15:H31 (strain 536 / UPEC).